Consider the following 2684-residue polypeptide: Teneurin-1 (2684 aa).

3 disordered regions span residues 1 to 37 (MFQH…HDYT), 127 to 156 (TTSS…PTYS), and 170 to 204 (GTNQ…KKFD). At 1–216 (MFQHRTTNAQ…SDTCSRWPSK (216 aa)) the chain is on the cytoplasmic side. Pro residues predominate over residues 11-24 (GPPPNRPMPRPPAG). Positions 127–136 (TTSSTLSPAS) are enriched in low complexity. The chain crosses the membrane as a helical span at residues 217–237 (WNILLAAALLVALFVICILLF). Residues 238–2684 (RAPNYVYTQP…VHSWKFRKSE (2447 aa)) lie on the Extracellular side of the membrane. EGF-like domains are found at residues 463–499 (TGRT…KECE) and 501–534 (RHNW…EACE). 6 cysteine pairs are disulfide-bonded: Cys-467–Cys-476, Cys-472–Cys-487, Cys-489–Cys-498, Cys-505–Cys-516, Cys-510–Cys-522, and Cys-524–Cys-533. The interval 576–614 (PQAQSPPRRGQEPTESSKTRKAQVKPTPTSEKKKESREL) is disordered. Composition is skewed to basic and acidic residues over residues 584 to 593 (RGQEPTESSK) and 605 to 614 (SEKKKESREL). 2 consecutive EGF-like domains span residues 650–684 (DSVD…SNCT) and 716–753 (AIDG…VDCS). 6 cysteine pairs are disulfide-bonded: Cys-654–Cys-666, Cys-659–Cys-672, Cys-674–Cys-683, Cys-720–Cys-730, Cys-724–Cys-741, and Cys-743–Cys-752. NHL repeat units follow at residues 1276 to 1317 (DSCG…IDTT), 1334 to 1378 (RTCA…VVHD), 1398 to 1441 (SASA…VRKL), and 1470 to 1513 (AVSL…VSAR).

The protein belongs to the tenascin family. Teneurin subfamily. Post-translationally, probably proteolytically processed to generate a N-terminal intracellular domain. In terms of tissue distribution, isoform 1 is mainly expressed in organs derived from the mesoderm, including the pharynx, vulva muscles, gonad distal tip cells, intestine and several tail neurons. Isoform 2 is mainly expressed in the organs derived from the ectoderm, including hypodermal cells, head ganglion neurons and tail neurons (at protein level).

Its subcellular location is the nucleus. The protein localises to the cell membrane. The protein resides in the membrane. Plays a role in the gonadal basement membrane maintenance and/or adhesion early in development. Contributes to the guidance of pharyngeal neurons. The polypeptide is Teneurin-1 (ten-1) (Caenorhabditis elegans).